The primary structure comprises 318 residues: Transaldolase (318 aa).

Catalysis depends on Lys132, which acts as the Schiff-base intermediate with substrate.

The protein belongs to the transaldolase family. Type 1 subfamily. As to quaternary structure, homodimer.

Its subcellular location is the cytoplasm. It carries out the reaction D-sedoheptulose 7-phosphate + D-glyceraldehyde 3-phosphate = D-erythrose 4-phosphate + beta-D-fructose 6-phosphate. The protein operates within carbohydrate degradation; pentose phosphate pathway; D-glyceraldehyde 3-phosphate and beta-D-fructose 6-phosphate from D-ribose 5-phosphate and D-xylulose 5-phosphate (non-oxidative stage): step 2/3. Its function is as follows. Transaldolase is important for the balance of metabolites in the pentose-phosphate pathway. In Shewanella loihica (strain ATCC BAA-1088 / PV-4), this protein is Transaldolase.